Here is a 344-residue protein sequence, read N- to C-terminus: Eukaryotic translation initiation factor 2 subunit alpha homolog (344 aa).

Residues 21–92 form the S1 motif domain; it reads DMAVMIQVKN…EKGYIDLSKR (72 aa). The residue at position 56 (S56) is a Phosphoserine; by GCN2. The tract at residues 312-344 is disordered; that stretch reads DNEEMSGDEDSGDEEEDTGMGEVDLDAGAGIIE. Over residues 314–336 the composition is skewed to acidic residues; the sequence is EEMSGDEDSGDEEEDTGMGEVDL.

This sequence belongs to the eIF-2-alpha family. In terms of assembly, heterotrimer composed of an alpha, a beta and a gamma chain. In terms of processing, phosphorylated at Ser-56 by GCN2.

Functions in the early steps of protein synthesis by forming a ternary complex with GTP and initiator tRNA. This complex binds to a 40S ribosomal subunit, followed by mRNA binding to form a 43S pre-initiation complex. Junction of the 60S ribosomal subunit to form the 80S initiation complex is preceded by hydrolysis of the GTP bound to eIF-2 and release of an eIF-2-GDP binary complex. In order for eIF-2 to recycle and catalyze another round of initiation, the GDP bound to eIF-2 must exchange with GTP by way of a reaction catalyzed by eIF-2B. In Arabidopsis thaliana (Mouse-ear cress), this protein is Eukaryotic translation initiation factor 2 subunit alpha homolog.